The following is a 217-amino-acid chain: ATP-dependent Clp protease proteolytic subunit (217 aa).

Serine 121 acts as the Nucleophile in catalysis. Histidine 146 is an active-site residue.

It belongs to the peptidase S14 family. As to quaternary structure, fourteen ClpP subunits assemble into 2 heptameric rings which stack back to back to give a disk-like structure with a central cavity, resembling the structure of eukaryotic proteasomes.

It is found in the cytoplasm. The catalysed reaction is Hydrolysis of proteins to small peptides in the presence of ATP and magnesium. alpha-casein is the usual test substrate. In the absence of ATP, only oligopeptides shorter than five residues are hydrolyzed (such as succinyl-Leu-Tyr-|-NHMec, and Leu-Tyr-Leu-|-Tyr-Trp, in which cleavage of the -Tyr-|-Leu- and -Tyr-|-Trp bonds also occurs).. In terms of biological role, cleaves peptides in various proteins in a process that requires ATP hydrolysis. Has a chymotrypsin-like activity. Plays a major role in the degradation of misfolded proteins. The chain is ATP-dependent Clp protease proteolytic subunit from Burkholderia lata (strain ATCC 17760 / DSM 23089 / LMG 22485 / NCIMB 9086 / R18194 / 383).